The sequence spans 111 residues: UPF0339 protein BP0521 (111 aa).

Tandem repeats lie at residues 9–57 (ASGT…RYQR) and 60–108 (AKDG…TKDQ). Residues 86-111 (TQARDNGIASVKSNAPGAPTKDQTQA) form a disordered region.

The protein belongs to the UPF0339 family. Duplicated subfamily.

The polypeptide is UPF0339 protein BP0521 (Bordetella pertussis (strain Tohama I / ATCC BAA-589 / NCTC 13251)).